A 264-amino-acid polypeptide reads, in one-letter code: Neuferricin (264 aa).

Residues Met1–Ala22 form the signal peptide. Residues Phe35–Thr134 enclose the Cytochrome b5 heme-binding domain.

This sequence belongs to the cytochrome b5 family. MAPR subfamily.

The protein localises to the secreted. Functionally, heme-binding protein which promotes neuronal but not astrocyte differentiation. The polypeptide is Neuferricin (Homo sapiens (Human)).